Consider the following 386-residue polypeptide: Acetylornithine aminotransferase (386 aa).

Pyridoxal 5'-phosphate is bound by residues 94–95 and Phe-121; that span reads GT. Arg-124 serves as a coordination point for N(2)-acetyl-L-ornithine. A pyridoxal 5'-phosphate-binding site is contributed by 206-209; that stretch reads DEVQ. Lys-235 carries the N6-(pyridoxal phosphate)lysine modification. Ser-263 contacts N(2)-acetyl-L-ornithine. Position 264 (Thr-264) interacts with pyridoxal 5'-phosphate.

It belongs to the class-III pyridoxal-phosphate-dependent aminotransferase family. ArgD subfamily. Homodimer. Pyridoxal 5'-phosphate is required as a cofactor.

The protein resides in the cytoplasm. The enzyme catalyses N(2)-acetyl-L-ornithine + 2-oxoglutarate = N-acetyl-L-glutamate 5-semialdehyde + L-glutamate. The protein operates within amino-acid biosynthesis; L-arginine biosynthesis; N(2)-acetyl-L-ornithine from L-glutamate: step 4/4. This Listeria monocytogenes serotype 4b (strain F2365) protein is Acetylornithine aminotransferase.